Consider the following 159-residue polypeptide: MADAVLFEFLHTEMVAELWAPDPDPGSGGKRRSLSVLEGLGFRVGQALGERLPLETPAFREELDALKFLCRDLWAAMFQKHMDGLRTNHQGTYVLQDNSFPLLVTMGSGPQYLEEAPKFLAFTCGLLCGALHTLGFQSLVTASVASLPACKFQVVIQKS.

Ser33 bears the Phosphoserine mark.

The protein belongs to the TRAPP small subunits family. BET3 subfamily. As to quaternary structure, part of the multisubunit transport protein particle (TRAPP) complex. Heterodimer with TRAPPC3. The heterodimer TRAPPC3-TRAPPC6A interacts with TRAPPC2L. Interacts with TRAPPC2L. As to expression, ubiquitous, with lowest expression in skeletal muscle and brain and highest in kidney, liver and testis, as well as in cultured melanocytes.

Its subcellular location is the golgi apparatus. It is found in the cis-Golgi network. The protein localises to the endoplasmic reticulum. Its function is as follows. May play a role in vesicular transport during the biogenesis of melanosomes. The protein is Trafficking protein particle complex subunit 6A of Mus musculus (Mouse).